Reading from the N-terminus, the 526-residue chain is Seipin-2 (526 aa).

Positions 33–77 (PIRSNSHQPSSLLRRRKSAHRRDLISSDIETEPSSSSDGFDVGEK) are disordered. The span at 58–70 (SSDIETEPSSSSD) shows a compositional bias: low complexity. Transmembrane regions (helical) follow at residues 195–215 (SLLT…FDPF), 224–243 (FLMA…MNPF), 258–278 (FGWG…LLVS), and 483–503 (LFVW…LVCC).

Belongs to the seipin family. In terms of tissue distribution, expressed in seeds, seedlings, leaves, stems and roots. Not detected in flowers.

It is found in the endoplasmic reticulum membrane. Functionally, involved in lipid metabolism and lipid droplet (LD) morphology, number, and size. Supports the formation of small-sized LDs and modulates triacylglycerol accumulation. Induces probably a reorganization of the endoplasmic reticulum into LD-forming domains. This is Seipin-2 from Arabidopsis thaliana (Mouse-ear cress).